The primary structure comprises 97 residues: Citrate lyase acyl carrier protein (97 aa).

An O-(phosphoribosyl dephospho-coenzyme A)serine modification is found at serine 14.

The protein belongs to the CitD family. As to quaternary structure, oligomer with a subunit composition of (alpha,beta,gamma)6.

Its subcellular location is the cytoplasm. Functionally, covalent carrier of the coenzyme of citrate lyase. In Yersinia enterocolitica serotype O:8 / biotype 1B (strain NCTC 13174 / 8081), this protein is Citrate lyase acyl carrier protein.